A 266-amino-acid polypeptide reads, in one-letter code: MDFVAKNLTKLRETNPLVQNITNYVVMNSTANSLLALGASPVMAHAMDELEEMVSIASSLVVNIGTLDEYWIPSMEKAAKIATDLKKPIILDPVGAGATKLRTKTALKILDFADISVLRGNFGEIAAVLGEHGKTRGVDSVAYDSNEAIELSKNAAKEFNTVSAVTGPIDYVSNGKELYAISNGHPMLSKVTGTGCASTSIIGAFSAVDEPLKAAVSGLTVYGISAEMAFAEAPYPGTFQAKVYDWLYRIDEKLVLEKAKVNKFEI.

M43 provides a ligand contact to substrate. The ATP site is built by R119 and T166. A substrate-binding site is contributed by G193.

It belongs to the Thz kinase family. The cofactor is Mg(2+).

It catalyses the reaction 5-(2-hydroxyethyl)-4-methylthiazole + ATP = 4-methyl-5-(2-phosphooxyethyl)-thiazole + ADP + H(+). It participates in cofactor biosynthesis; thiamine diphosphate biosynthesis; 4-methyl-5-(2-phosphoethyl)-thiazole from 5-(2-hydroxyethyl)-4-methylthiazole: step 1/1. Catalyzes the phosphorylation of the hydroxyl group of 4-methyl-5-beta-hydroxyethylthiazole (THZ). The protein is Hydroxyethylthiazole kinase of Methanococcus maripaludis (strain C7 / ATCC BAA-1331).